The chain runs to 311 residues: tRNA dimethylallyltransferase (311 aa).

An ATP-binding site is contributed by 9 to 16; that stretch reads GPTAVGKT. Residue 11–16 participates in substrate binding; sequence TAVGKT. The tract at residues 34–37 is interaction with substrate tRNA; that stretch reads DSMQ.

The protein belongs to the IPP transferase family. As to quaternary structure, monomer. Requires Mg(2+) as cofactor.

It catalyses the reaction adenosine(37) in tRNA + dimethylallyl diphosphate = N(6)-dimethylallyladenosine(37) in tRNA + diphosphate. In terms of biological role, catalyzes the transfer of a dimethylallyl group onto the adenine at position 37 in tRNAs that read codons beginning with uridine, leading to the formation of N6-(dimethylallyl)adenosine (i(6)A). The chain is tRNA dimethylallyltransferase from Clostridium botulinum (strain Langeland / NCTC 10281 / Type F).